Here is a 389-residue protein sequence, read N- to C-terminus: Adenylyltransferase and sulfurtransferase uba4 (389 aa).

ATP-binding positions include glycine 40, aspartate 61, 68-72 (SNLHR), lysine 85, and 129-130 (DT). Residues cysteine 171 and cysteine 174 each coordinate Zn(2+). Cysteine 188 acts as the Glycyl thioester intermediate; for adenylyltransferase activity in catalysis. 2 residues coordinate Zn(2+): cysteine 252 and cysteine 255. Positions 298–387 (AQRAPYLVDV…WSRQIDPNFP (90 aa)) constitute a Rhodanese domain. The Cysteine persulfide intermediate role is filled by cysteine 347.

The protein in the N-terminal section; belongs to the HesA/MoeB/ThiF family. UBA4 subfamily. Zn(2+) serves as cofactor.

It localises to the cytoplasm. Its subcellular location is the cytosol. The catalysed reaction is [molybdopterin-synthase sulfur-carrier protein]-C-terminal Gly-Gly + ATP + H(+) = [molybdopterin-synthase sulfur-carrier protein]-C-terminal Gly-Gly-AMP + diphosphate. The enzyme catalyses [molybdopterin-synthase sulfur-carrier protein]-C-terminal Gly-Gly-AMP + S-sulfanyl-L-cysteinyl-[cysteine desulfurase] + AH2 = [molybdopterin-synthase sulfur-carrier protein]-C-terminal-Gly-aminoethanethioate + L-cysteinyl-[cysteine desulfurase] + A + AMP + 2 H(+). Its pathway is tRNA modification; 5-methoxycarbonylmethyl-2-thiouridine-tRNA biosynthesis. It functions in the pathway cofactor biosynthesis; molybdopterin biosynthesis. Plays a central role in 2-thiolation of mcm(5)S(2)U at tRNA wobble positions of cytosolic tRNA(Lys), tRNA(Glu) and tRNA(Gln). Also essential during biosynthesis of the molybdenum cofactor. Acts by mediating the C-terminal thiocarboxylation of sulfur carriers URM1 and CNX5/MOCS2A. Its N-terminus first activates urm1 and mocs2a as acyl-adenylates (-COAMP), then the persulfide sulfur on the catalytic cysteine is transferred to URM1 and CNX5/MOCS2A to form thiocarboxylation (-COSH) of their C-terminus. The reaction probably involves hydrogen sulfide that is generated from the persulfide intermediate and that acts as a nucleophile towards URM1 and CNX5/MOCS2A. Subsequently, a transient disulfide bond is formed. Does not use thiosulfate as sulfur donor; NFS1 probably acting as a sulfur donor for thiocarboxylation reactions. Required for growth on nitrate as a sole nitrogen source. This chain is Adenylyltransferase and sulfurtransferase uba4, found in Ogataea parapolymorpha (strain ATCC 26012 / BCRC 20466 / JCM 22074 / NRRL Y-7560 / DL-1) (Yeast).